The sequence spans 457 residues: Argininosuccinate lyase (457 aa).

Belongs to the lyase 1 family. Argininosuccinate lyase subfamily.

It localises to the cytoplasm. It catalyses the reaction 2-(N(omega)-L-arginino)succinate = fumarate + L-arginine. It participates in amino-acid biosynthesis; L-arginine biosynthesis; L-arginine from L-ornithine and carbamoyl phosphate: step 3/3. The chain is Argininosuccinate lyase from Psychrobacter arcticus (strain DSM 17307 / VKM B-2377 / 273-4).